The sequence spans 125 residues: NADPH-dependent 7-cyano-7-deazaguanine reductase (125 aa).

C40 (thioimide intermediate) is an active-site residue. The active-site Proton donor is the D47. Substrate is bound by residues 62 to 64 (LET) and 81 to 82 (HE).

The protein belongs to the GTP cyclohydrolase I family. QueF type 1 subfamily.

It is found in the cytoplasm. It catalyses the reaction 7-aminomethyl-7-carbaguanine + 2 NADP(+) = 7-cyano-7-deazaguanine + 2 NADPH + 3 H(+). It functions in the pathway tRNA modification; tRNA-queuosine biosynthesis. In terms of biological role, catalyzes the NADPH-dependent reduction of 7-cyano-7-deazaguanine (preQ0) to 7-aminomethyl-7-deazaguanine (preQ1). This is NADPH-dependent 7-cyano-7-deazaguanine reductase from Frankia casuarinae (strain DSM 45818 / CECT 9043 / HFP020203 / CcI3).